A 309-amino-acid polypeptide reads, in one-letter code: tRNA dimethylallyltransferase (309 aa).

11–18 (GPTASGKS) is a binding site for ATP. Residue 13–18 (TASGKS) participates in substrate binding. Interaction with substrate tRNA regions lie at residues 36–39 (DSMQ) and 160–164 (QRLIR).

This sequence belongs to the IPP transferase family. In terms of assembly, monomer. The cofactor is Mg(2+).

The catalysed reaction is adenosine(37) in tRNA + dimethylallyl diphosphate = N(6)-dimethylallyladenosine(37) in tRNA + diphosphate. In terms of biological role, catalyzes the transfer of a dimethylallyl group onto the adenine at position 37 in tRNAs that read codons beginning with uridine, leading to the formation of N6-(dimethylallyl)adenosine (i(6)A). This is tRNA dimethylallyltransferase from Rickettsia felis (strain ATCC VR-1525 / URRWXCal2) (Rickettsia azadi).